Reading from the N-terminus, the 1073-residue chain is Carbamoyl phosphate synthase large chain (1073 aa).

Residues P2 to E403 are carboxyphosphate synthetic domain. ATP is bound by residues R129, R169, G175, G176, E208, L210, E215, G241, I242, H243, Q285, and E299. The 196-residue stretch at D133–V328 folds into the ATP-grasp 1 domain. Residues Q285, E299, and N301 each contribute to the Mg(2+) site. 3 residues coordinate Mn(2+): Q285, E299, and N301. The interval V404–A553 is oligomerization domain. A carbamoyl phosphate synthetic domain region spans residues N554 to N936. The ATP-grasp 2 domain maps to Q679–A870. ATP-binding residues include R715, H754, L756, E761, G786, V787, H788, S789, Q829, and E841. Residues Q829, E841, and N843 each contribute to the Mg(2+) site. The Mn(2+) site is built by Q829, E841, and N843. The region spanning S937–K1073 is the MGS-like domain. Residues S937 to K1073 form an allosteric domain region.

Belongs to the CarB family. In terms of assembly, composed of two chains; the small (or glutamine) chain promotes the hydrolysis of glutamine to ammonia, which is used by the large (or ammonia) chain to synthesize carbamoyl phosphate. Tetramer of heterodimers (alpha,beta)4. The cofactor is Mg(2+). Mn(2+) is required as a cofactor.

The enzyme catalyses hydrogencarbonate + L-glutamine + 2 ATP + H2O = carbamoyl phosphate + L-glutamate + 2 ADP + phosphate + 2 H(+). It catalyses the reaction hydrogencarbonate + NH4(+) + 2 ATP = carbamoyl phosphate + 2 ADP + phosphate + 2 H(+). Its pathway is amino-acid biosynthesis; L-arginine biosynthesis; carbamoyl phosphate from bicarbonate: step 1/1. It participates in pyrimidine metabolism; UMP biosynthesis via de novo pathway; (S)-dihydroorotate from bicarbonate: step 1/3. Large subunit of the glutamine-dependent carbamoyl phosphate synthetase (CPSase). CPSase catalyzes the formation of carbamoyl phosphate from the ammonia moiety of glutamine, carbonate, and phosphate donated by ATP, constituting the first step of 2 biosynthetic pathways, one leading to arginine and/or urea and the other to pyrimidine nucleotides. The large subunit (synthetase) binds the substrates ammonia (free or transferred from glutamine from the small subunit), hydrogencarbonate and ATP and carries out an ATP-coupled ligase reaction, activating hydrogencarbonate by forming carboxy phosphate which reacts with ammonia to form carbamoyl phosphate. This is Carbamoyl phosphate synthase large chain from Escherichia coli O157:H7.